We begin with the raw amino-acid sequence, 483 residues long: Glutamyl-tRNA(Gln) amidotransferase subunit A (483 aa).

Active-site charge relay system residues include K76 and S151. Catalysis depends on S175, which acts as the Acyl-ester intermediate.

The protein belongs to the amidase family. GatA subfamily. In terms of assembly, heterotrimer of A, B and C subunits.

The catalysed reaction is L-glutamyl-tRNA(Gln) + L-glutamine + ATP + H2O = L-glutaminyl-tRNA(Gln) + L-glutamate + ADP + phosphate + H(+). Allows the formation of correctly charged Gln-tRNA(Gln) through the transamidation of misacylated Glu-tRNA(Gln) in organisms which lack glutaminyl-tRNA synthetase. The reaction takes place in the presence of glutamine and ATP through an activated gamma-phospho-Glu-tRNA(Gln). This Ectopseudomonas mendocina (strain ymp) (Pseudomonas mendocina) protein is Glutamyl-tRNA(Gln) amidotransferase subunit A.